Here is a 2713-residue protein sequence, read N- to C-terminus: Histone-lysine N-methyltransferase 2B (2713 aa).

Positions 1–11 (MAAAAGGGSCP) are enriched in gly residues. Disordered stretches follow at residues 1–65 (MAAA…GEDT), 82–524 (RLWA…PTVV), and 542–783 (VSAR…ARVA). Alanine 2 is subject to N-acetylalanine. The span at 12 to 24 (GPGSARGRFPGRP) shows a compositional bias: low complexity. A Menin-binding motif (MBM) motif is present at residues 17–36 (RGRFPGRPRGSGGGGGRGGR). 2 stretches are compositionally biased toward gly residues: residues 25-38 (RGSGGGGGRGGRGN) and 49-60 (RGGGAAGPGGAE). A DNA-binding region (a.T hook 1) is located at residues 37-44 (GNGAERVR). Residues 109–123 (PEEESSDGESEEEEF) are compositionally biased toward acidic residues. A DNA-binding region (a.T hook 2) is located at residues 110-117 (EEESSDGE). Phosphoserine occurs at positions 113, 114, and 118. Basic residues predominate over residues 144 to 158 (QRGRAPRGRGRKHKT). A compositionally biased stretch (basic and acidic residues) spans 340–360 (PQRKDGDEPERGSCRKKQEQK). Positions 357 to 365 (QEQKLEEEE) form a DNA-binding region, a.T hook 3. Positions 361 to 393 (LEEEEEEEEKEGEEKEEKDDNEDNNKQEEEEET) are enriched in acidic residues. The segment covering 394–412 (ERAVAEEEAMLAKEKEEAK) has biased composition (basic and acidic residues). Positions 414 to 460 (PSPPLTPPVPSPPPPLPPPSTSPPPPASPLPPPVSPPPPLSPPPYPA) are enriched in pro residues. Positions 501–517 (GTLSPTPNPSTTTGSPL) are enriched in low complexity. The span at 555-566 (RFMDEDPPKPPK) shows a compositional bias: basic and acidic residues. Over residues 577–605 (ATSPPAPQEPVPVSSPPRVPTPPSTPVPL) the composition is skewed to pro residues. Over residues 606-617 (PEKRRSILREPT) the composition is skewed to basic and acidic residues. The span at 627–645 (LPPPPPAPPPAPSPPPAPA) shows a compositional bias: pro residues. Composition is skewed to low complexity over residues 646–657 (TPSRRPLLLRAP), 715–728 (VPVVTSPVKVEVPP), and 738–756 (QQLQLQQPPQALQTQLLPQ). The segment covering 757–774 (ALPPQQPQAQPPPSPQHT) has biased composition (pro residues). A Glycyl lysine isopeptide (Lys-Gly) (interchain with G-Cter in SUMO2) cross-link involves residue lysine 810. Phosphoserine is present on residues serine 826, serine 849, and serine 866. Disordered stretches follow at residues 831–872 (TEEA…QGPR) and 899–964 (SALP…HHGK). Positions 841-862 (TPDRGCVRSEDESMEAKRDRAS) are enriched in basic and acidic residues. Positions 912–922 (EDTSSASETES) are enriched in low complexity. Serine 941 is subject to Phosphoserine. The segment covering 953 to 964 (TPRRSLPSHHGK) has biased composition (basic residues). Residues 964 to 1011 (KKMRMARCGHCRGCLRVQDCGSCVNCLDKPKFGGPNTKKQCCVYRKCD) form a CXXC-type zinc finger. Residues cysteine 971, cysteine 974, cysteine 977, cysteine 983, cysteine 986, cysteine 989, cysteine 1005, and cysteine 1010 each coordinate Zn(2+). 2 disordered regions span residues 1032–1076 (LLPW…DSLL) and 1088–1138 (QRPS…LQPV). Phosphoserine is present on residues serine 1037, serine 1040, serine 1098, and serine 1101. A Glycyl lysine isopeptide (Lys-Gly) (interchain with G-Cter in SUMO2) cross-link involves residue lysine 1142. 3 PHD-type zinc fingers span residues 1207-1258 (PMVC…CKFC), 1255-1309 (CKFC…CVRC), and 1341-1402 (GNYC…CAGA). The 101-residue stretch at 1410-1510 (ALSGALQGGL…GLLLKLLESA (101 aa)) folds into the Bromo domain. Residues 1550 to 1572 (RQQESETPESGQPPGDPSAAFQS) are disordered. The C2HC pre-PHD-type zinc finger occupies 1584 to 1624 (PRQCALCLKYGDADSKEAGRLLYIGQNEWTHVNCAIWSAEV). The PHD-type 4 zinc-finger motif lies at 1645–1692 (MRCELCLKPGATVGCCLSSCLSNFHFMCARASYCIFQDDKKVFCQKHT). The FYR N-terminal domain occupies 1733–1789 (VINVLIGSIRINSLGTLSDLSDCEGRLFPIGYQCSRLYWSTVDARRRCWYRCRILEY). Positions 1808-1821 (QTIVHSPTPSSDTD) are enriched in polar residues. Disordered stretches follow at residues 1808 to 1973 (QTIV…GPDF), 2056 to 2104 (QLDG…PPED), 2116 to 2160 (NLGG…RTFA), 2279 to 2356 (VSTF…RCPL), and 2382 to 2408 (YSAGEASSSEEEPPSPEDKENQVPKRV). Low complexity-rich tracts occupy residues 1872–1890 (PLGGVSFGPLPSPGSPSSL) and 1923–1933 (RRTSSPLRTSP). Phosphoserine is present on residues serine 1926 and serine 1932. Residues 1939 to 1950 (LSTSVTALTPTS) are compositionally biased toward polar residues. Residues 2058–2068 (DGVDDGTDSEA) show a composition bias toward acidic residues. A phosphothreonine mark is found at threonine 2064 and threonine 2079. Positions 2084 to 2093 (PGVGRGGVLG) are enriched in gly residues. Residues 2140–2153 (NGSQPPQSLSTSPA) are compositionally biased toward polar residues. Phosphoserine is present on residues serine 2286 and serine 2346. The region spanning 2409–2490 (GPHLRFEISS…QRCQHYKFRY (82 aa)) is the FYR C-terminal domain. The WDR5 interaction motif (WIN) motif lies at 2506–2511 (GAARAE). The 117-residue stretch at 2573-2689 (EAVGVYRSAI…RGEELTYDYK (117 aa)) folds into the SET domain. S-adenosyl-L-methionine is bound by residues histidine 2583, arginine 2585, tyrosine 2627, and 2650 to 2651 (NH). Positions 2653 and 2701 each coordinate Zn(2+). The Post-SET domain maps to 2697–2713 (NKLPCNCGAKRCRRFLN). Asparagine 2702 lines the S-adenosyl-L-methionine pocket. Residues cysteine 2703 and cysteine 2708 each coordinate Zn(2+).

It belongs to the class V-like SAM-binding methyltransferase superfamily. Histone-lysine methyltransferase family. TRX/MLL subfamily. As to quaternary structure, component of the menin-associated histone methyltransferase complex, at least composed of KMT2B/MLL4, ASH2L, RBBP5, WDR5, DPY30, MEN1; the complex interacts with POLR2A and POLR2B via MEN1. Interacts with NFE2. Interacts with KDM6B. Interacts (via WIN motif) with WDR5. Interacts (via MBM motif) with MEN1.

The protein localises to the nucleus. The enzyme catalyses L-lysyl(4)-[histone H3] + S-adenosyl-L-methionine = N(6)-methyl-L-lysyl(4)-[histone H3] + S-adenosyl-L-homocysteine + H(+). The catalysed reaction is N(6)-methyl-L-lysyl(4)-[histone H3] + S-adenosyl-L-methionine = N(6),N(6)-dimethyl-L-lysyl(4)-[histone H3] + S-adenosyl-L-homocysteine + H(+). Functionally, histone methyltransferase that catalyzes methyl group transfer from S-adenosyl-L-methionine to the epsilon-amino group of 'Lys-4' of histone H3 (H3K4) via a non-processive mechanism. Part of chromatin remodeling machinery predominantly forms H3K4me1 and H3K4me2 methylation marks at active chromatin sites where transcription and DNA repair take place. Likely plays a redundant role with KMT2C in enriching H3K4me1 marks on primed and active enhancer elements. Plays a central role in beta-globin locus transcription regulation by being recruited by NFE2. Plays an important role in controlling bulk H3K4me during oocyte growth and preimplantation development. Required during the transcriptionally active period of oocyte growth for the establishment and/or maintenance of bulk H3K4 trimethylation (H3K4me3), global transcriptional silencing that preceeds resumption of meiosis, oocyte survival and normal zygotic genome activation. The chain is Histone-lysine N-methyltransferase 2B (Kmt2b) from Mus musculus (Mouse).